Consider the following 316-residue polypeptide: tRNA pseudouridine synthase B (316 aa).

The Nucleophile role is filled by aspartate 47.

Belongs to the pseudouridine synthase TruB family. Type 1 subfamily.

It catalyses the reaction uridine(55) in tRNA = pseudouridine(55) in tRNA. Its function is as follows. Responsible for synthesis of pseudouridine from uracil-55 in the psi GC loop of transfer RNAs. This chain is tRNA pseudouridine synthase B, found in Photobacterium profundum (strain SS9).